The sequence spans 197 residues: Small ribosomal subunit protein uS4B (197 aa).

The S4 RNA-binding domain maps to 88-151 (CRLDNIAYRI…RKNDEFADNF (64 aa)).

It belongs to the universal ribosomal protein uS4 family. As to quaternary structure, part of the 30S ribosomal subunit. Contacts protein S5. The interaction surface between S4 and S5 is involved in control of translational fidelity.

Its function is as follows. One of the primary rRNA binding proteins, it binds directly to 16S rRNA where it nucleates assembly of the body of the 30S subunit. With S5 and S12 plays an important role in translational accuracy. The sequence is that of Small ribosomal subunit protein uS4B from Clostridium botulinum (strain Langeland / NCTC 10281 / Type F).